A 715-amino-acid chain; its full sequence is Fatty acid oxidation complex subunit alpha (715 aa).

The interval 1-190 is enoyl-CoA hydratase/isomerase; the sequence is MIYEGKAITV…KVSAVDAVVT (190 aa). Asp297 is a substrate binding site. The segment at 312-715 is 3-hydroxyacyl-CoA dehydrogenase; it reads KDVKQAAVLG…MAKNGQSFFG (404 aa). NAD(+) is bound by residues Met325, Asp344, 401-403, Lys408, and Ser430; that span reads VVE. His451 acts as the For 3-hydroxyacyl-CoA dehydrogenase activity in catalysis. Asn454 serves as a coordination point for NAD(+). Asn501 and Tyr660 together coordinate substrate.

This sequence in the N-terminal section; belongs to the enoyl-CoA hydratase/isomerase family. The protein in the C-terminal section; belongs to the 3-hydroxyacyl-CoA dehydrogenase family. As to quaternary structure, heterotetramer of two alpha chains (FadB) and two beta chains (FadA).

It catalyses the reaction a (3S)-3-hydroxyacyl-CoA + NAD(+) = a 3-oxoacyl-CoA + NADH + H(+). The catalysed reaction is a (3S)-3-hydroxyacyl-CoA = a (2E)-enoyl-CoA + H2O. The enzyme catalyses a 4-saturated-(3S)-3-hydroxyacyl-CoA = a (3E)-enoyl-CoA + H2O. It carries out the reaction (3S)-3-hydroxybutanoyl-CoA = (3R)-3-hydroxybutanoyl-CoA. It catalyses the reaction a (3Z)-enoyl-CoA = a 4-saturated (2E)-enoyl-CoA. The catalysed reaction is a (3E)-enoyl-CoA = a 4-saturated (2E)-enoyl-CoA. It participates in lipid metabolism; fatty acid beta-oxidation. In terms of biological role, involved in the aerobic and anaerobic degradation of long-chain fatty acids via beta-oxidation cycle. Catalyzes the formation of 3-oxoacyl-CoA from enoyl-CoA via L-3-hydroxyacyl-CoA. It can also use D-3-hydroxyacyl-CoA and cis-3-enoyl-CoA as substrate. This is Fatty acid oxidation complex subunit alpha from Pseudomonas fragi.